We begin with the raw amino-acid sequence, 195 residues long: MRVAEVTRNTSETQIRVSLNLDGTGRQKLASGVPFLDHMLDQIARHGMFDLEVEATGDTHIDDHHTVEDVGITLGQAVARAIGDKKGITRYGHSYVPLDECLSRVVIDFSGRPGLEFHVPFTRARVGSFDVDLTIEFFRGFVNHAGVTLHIDNIRGINAHHQCETVFKAFGRALRMAVELDPRAANTIPSTKGTL.

The protein belongs to the imidazoleglycerol-phosphate dehydratase family.

The protein resides in the cytoplasm. It catalyses the reaction D-erythro-1-(imidazol-4-yl)glycerol 3-phosphate = 3-(imidazol-4-yl)-2-oxopropyl phosphate + H2O. The protein operates within amino-acid biosynthesis; L-histidine biosynthesis; L-histidine from 5-phospho-alpha-D-ribose 1-diphosphate: step 6/9. The sequence is that of Imidazoleglycerol-phosphate dehydratase from Cupriavidus metallidurans (strain ATCC 43123 / DSM 2839 / NBRC 102507 / CH34) (Ralstonia metallidurans).